The chain runs to 293 residues: Phosphate-binding protein PstS 2 (293 aa).

An N-terminal signal peptide occupies residues 1–23 (MKKHKMLSLLAVSGLMGIGILAG). C24 is lipidated: N-palmitoyl cysteine. A lipid anchor (S-diacylglycerol cysteine) is attached at C24.

Belongs to the PstS family. The complex is composed of two ATP-binding proteins (PstB), two transmembrane proteins (PstC and PstA) and a solute-binding protein (PstS).

The protein resides in the cell membrane. Functionally, part of the ABC transporter complex PstSACB involved in phosphate import. The chain is Phosphate-binding protein PstS 2 (pstS2) from Streptococcus agalactiae serotype III (strain NEM316).